The primary structure comprises 177 residues: MSTKAWNASRLSGPDPSTPWSLKKPLQHGSRPPKGKRLTVCPPTRPKQTIRISASHASQQLDQAKAACLAVTIRDLEEATAVMRSWEHSLVTPQCIAPRYSIIMFMITAVKRLRESKMLTLSWFNQALMMVSKSGEEMRNLRTAMWILANLIPREVLPLTGDLLPSLQQQEPPMLKQ.

The span at 1-10 (MSTKAWNASR) shows a compositional bias: polar residues. Residues 1–37 (MSTKAWNASRLSGPDPSTPWSLKKPLQHGSRPPKGKR) are disordered.

This sequence belongs to the morbillivirus protein C family.

In Bos indicus (Zebu), this protein is Protein C (P/V/C).